A 353-amino-acid polypeptide reads, in one-letter code: Survival factor 2 (353 aa).

The protein belongs to the SVF1 family.

Its subcellular location is the cytoplasm. The protein localises to the nucleus. In Schizosaccharomyces pombe (strain 972 / ATCC 24843) (Fission yeast), this protein is Survival factor 2 (svf2).